Consider the following 488-residue polypeptide: Centrosomal protein cep57l1 (488 aa).

The stretch at 71–226 (LESEKTHARD…AQVQTSLEVN (156 aa)) forms a coiled coil. 2 disordered regions span residues 232–272 (SASS…PPSK) and 311–342 (PRVS…LMSS). Residues 241 to 250 (RKVKKKKQSK) are compositionally biased toward basic residues. Basic and acidic residues-rich tracts occupy residues 259 to 270 (PSSKEPLSKEPP) and 314 to 325 (SQKDPKTVEHKP). Residues 377 to 403 (KNTDMREDLERELDYLVKQMEIKSDQI) adopt a coiled-coil conformation. The disordered stretch occupies residues 416–464 (LKKTAKKQPRPPSTTKPAEDEQNIGATDPCTPRNKGNLANGTGTPNSKA). Residues 452–464 (NLANGTGTPNSKA) are compositionally biased toward polar residues.

This sequence belongs to the translokin family. Interacts with clip1, mis12, ndc80 and zwint. Interacts with gamma-tubulin.

It localises to the cytoplasm. The protein resides in the cytoskeleton. The protein localises to the microtubule organizing center. It is found in the centrosome. Its subcellular location is the chromosome. It localises to the centromere. The protein resides in the kinetochore. The protein localises to the spindle. Its function is as follows. Required for spindle microtubule attachment to both kinetochores and centrosomes. Also functions to tether minus-ends of spindle microtubules to centrosomes. May act by forming ring-like structures around microtubules, or by serving as a cross-linker or scaffold at the attachment site. The chain is Centrosomal protein cep57l1 (cep57l1) from Xenopus laevis (African clawed frog).